The chain runs to 355 residues: Tetraspanin-10 (355 aa).

A disordered region spans residues 1-33 (MEEGERSPLLSQETAGQKPLSVHRPPTSGCLGP). Topologically, residues 1–78 (MEEGERSPLL…LSPGSSCVKY (78 aa)) are cytoplasmic. A helical membrane pass occupies residues 79–99 (LIFLSNFPFSLLGLLALAIGL). The Extracellular segment spans residues 100-120 (WGLAVKGSLGSDLGGPLPTDP). The helical transmembrane segment at 121 to 141 (MLGLALGGLVVSAASLAGCLG) threads the bilayer. Over 142–154 (ALCENTCLLRGFS) the chain is Cytoplasmic. The helical transmembrane segment at 155-175 (GGILAFLVLEAVAGALVVALW) threads the bilayer. The Extracellular segment spans residues 176–355 (GPLQDSLEHT…APPAAKPARG (180 aa)). 4 disulfides stabilise this stretch: Cys-212-Cys-279, Cys-213-Cys-243, Cys-229-Cys-237, and Cys-244-Cys-258. N-linked (GlcNAc...) asparagine glycosylation is present at Asn-228. Positions 327–355 (YGPGAHGEDRAGPQSPSPGAPPAAKPARG) are disordered. The span at 341 to 355 (SPSPGAPPAAKPARG) shows a compositional bias: pro residues.

Belongs to the tetraspanin (TM4SF) family. Interacts with ADAM10. Expressed in the eye, including iris, ciliary body, retinal pigment epithelium, but not lens (protein level).

It is found in the cell membrane. Part of TspanC8 subgroup, composed of 6 members that interact with the transmembrane metalloprotease ADAM10. This interaction is required for ADAM10 exit from the endoplasmic reticulum and for enzymatic maturation and trafficking to the cell surface as well as substrate specificity. Different TspanC8/ADAM10 complexes have distinct substrates. The polypeptide is Tetraspanin-10 (Homo sapiens (Human)).